A 417-amino-acid chain; its full sequence is D-amino acid dehydrogenase (417 aa).

FAD is bound at residue 3–17; it reads VVILGSGVIGVTSAW.

This sequence belongs to the DadA oxidoreductase family. Requires FAD as cofactor.

It catalyses the reaction a D-alpha-amino acid + A + H2O = a 2-oxocarboxylate + AH2 + NH4(+). It functions in the pathway amino-acid degradation; D-alanine degradation; NH(3) and pyruvate from D-alanine: step 1/1. Oxidative deamination of D-amino acids. This Edwardsiella ictaluri (strain 93-146) protein is D-amino acid dehydrogenase.